The sequence spans 399 residues: MIITSLLDTDLYKFTMMQVVLHHFPAANVEYRFRCRTPGVDLVPYIDEIRDEVRGLCSLRFVDVELDYLRRMRFIKSDFVDFLALFHLNEKYISITPSPKGNGEIDIVIEGPWLHTILFEIPVLAIVNEVYFRNTQREPDYREGRERLREKIKLLGAKPEFADCKIADYGTRRRFSKVWHEEVALTLRDGLGPQFAGTSNVLYAMKHDITPLGTMAHEYLQACQALGPRLRDSQIYGFEMWAKEYRGDLGIALSDVYGMDAFLNDFDMYFCKLFDGARHDSGDPFEWGERMLRHYEANRCDPRTKVLVFSDALDIPKVMQLYERFRGRCKLAFGVGTNLTNDLGYVPLQIVIKMVRCNGQPVAKLSDSPGKSMCDDKAYLAYLRQVFGIAQPVEEDASK.

At His217 the chain carries Phosphohistidine; by autocatalysis.

It belongs to the NAPRTase family. Transiently phosphorylated on a His residue during the reaction cycle. Phosphorylation strongly increases the affinity for substrates and increases the rate of nicotinate D-ribonucleotide production. Dephosphorylation regenerates the low-affinity form of the enzyme, leading to product release.

It carries out the reaction nicotinate + 5-phospho-alpha-D-ribose 1-diphosphate + ATP + H2O = nicotinate beta-D-ribonucleotide + ADP + phosphate + diphosphate. It functions in the pathway cofactor biosynthesis; NAD(+) biosynthesis; nicotinate D-ribonucleotide from nicotinate: step 1/1. In terms of biological role, catalyzes the synthesis of beta-nicotinate D-ribonucleotide from nicotinate and 5-phospho-D-ribose 1-phosphate at the expense of ATP. The polypeptide is Nicotinate phosphoribosyltransferase (Burkholderia orbicola (strain MC0-3)).